We begin with the raw amino-acid sequence, 179 residues long: Phosphopantetheine adenylyltransferase (179 aa).

Serine 23 provides a ligand contact to substrate. Residues 23-24 (SF) and histidine 31 contribute to the ATP site. Residues lysine 55, alanine 87, and arginine 101 each contribute to the substrate site. ATP contacts are provided by residues 102–104 (GIR), glutamate 112, and 137–143 (FAHVSSS).

Belongs to the bacterial CoaD family. As to quaternary structure, homohexamer. Mg(2+) is required as a cofactor.

Its subcellular location is the cytoplasm. It catalyses the reaction (R)-4'-phosphopantetheine + ATP + H(+) = 3'-dephospho-CoA + diphosphate. It participates in cofactor biosynthesis; coenzyme A biosynthesis; CoA from (R)-pantothenate: step 4/5. In terms of biological role, reversibly transfers an adenylyl group from ATP to 4'-phosphopantetheine, yielding dephospho-CoA (dPCoA) and pyrophosphate. The chain is Phosphopantetheine adenylyltransferase from Rhodopirellula baltica (strain DSM 10527 / NCIMB 13988 / SH1).